A 286-amino-acid chain; its full sequence is Putative WUSCHEL-related homeobox 2 (286 aa).

2 disordered regions span residues 1-25 (MAPA…VGST) and 128-152 (SSSS…SPTT). The homeobox; WUS-type DNA-binding region spans 23-87 (GSTTRWCPTP…NHKARDRQKL (65 aa)).

It belongs to the WUS homeobox family.

The protein resides in the nucleus. Its function is as follows. Transcription factor which may be involved in developmental processes. In Oryza sativa subsp. indica (Rice), this protein is Putative WUSCHEL-related homeobox 2 (WOX2).